The sequence spans 177 residues: Probasin (177 aa).

An N-terminal signal peptide occupies residues Met1–Ser17. Cys79 and Cys170 form a disulfide bridge.

It belongs to the calycin superfamily. Lipocalin family. As to expression, prostatic epithelial cells.

Its subcellular location is the nucleus. The protein localises to the secreted. The chain is Probasin (Pbsn) from Rattus norvegicus (Rat).